The chain runs to 825 residues: Phenylalanine--tRNA ligase beta subunit (825 aa).

Residues 39–154 enclose the tRNA-binding domain; it reads RSWAEGVVLG…KAHPLGSDAR (116 aa). In terms of domain architecture, B5 spans 411–506; it reads PLERTLKLRL…RLYGYDRFSE (96 aa). Residues Asp-484, Asp-490, Glu-493, and Glu-494 each contribute to the Mg(2+) site. The region spanning 731 to 824 is the FDX-ACB domain; the sequence is SPFPASDRDI…LEKHFPVTLR (94 aa).

The protein belongs to the phenylalanyl-tRNA synthetase beta subunit family. Type 1 subfamily. In terms of assembly, tetramer of two alpha and two beta subunits. It depends on Mg(2+) as a cofactor.

The protein localises to the cytoplasm. It catalyses the reaction tRNA(Phe) + L-phenylalanine + ATP = L-phenylalanyl-tRNA(Phe) + AMP + diphosphate + H(+). This chain is Phenylalanine--tRNA ligase beta subunit, found in Synechococcus sp. (strain JA-3-3Ab) (Cyanobacteria bacterium Yellowstone A-Prime).